We begin with the raw amino-acid sequence, 652 residues long: Zinc finger protein 503 (652 aa).

Residues 1–11 (MSTAPSLSALR) are compositionally biased toward polar residues. Residues 1–72 (MSTAPSLSAL…HAVPPSDPLR (72 aa)) form a disordered region. Over residues 16 to 32 (SGGGGGGGGGGGSGGGS) the composition is skewed to gly residues. The residue at position 107 (Ser-107) is a Phosphoserine. Disordered stretches follow at residues 126 to 283 (SQIG…GVPA) and 296 to 338 (INVD…SSVL). Residues 135–144 (PSSKLSSVAS) show a composition bias toward low complexity. 2 stretches are compositionally biased toward gly residues: residues 145 to 157 (NGGG…NGAG) and 194 to 209 (GGGG…GGGV). Lys-213 is modified (N6-acetyllysine). Positions 221–230 (ATCQPFTPRT) are enriched in polar residues. The span at 231–244 (GSPSSSASACSPGG) shows a compositional bias: low complexity. Ser-235 and Ser-241 each carry phosphoserine. Residues 254-263 (EGKDDKKDPE) show a composition bias toward basic and acidic residues. Positions 264–283 (AGGGGSSKGSGGASADGVPA) are enriched in gly residues. Residues 314-336 (GSDCGGSSSSSSGSGPSAPTSSS) show a composition bias toward low complexity. Residues 520-548 (HICNWVSANGPCDKRFATSEELLSHLRTH) form a C2H2-type zinc finger. Arg-642 is subject to Omega-N-methylarginine.

This sequence belongs to the Elbow/Noc family.

It is found in the nucleus. May function as a transcriptional repressor. The chain is Zinc finger protein 503 (Znf503) from Mus musculus (Mouse).